A 91-amino-acid polypeptide reads, in one-letter code: Transcription factor ILI7 (91 aa).

In terms of domain architecture, bHLH spans 4-58 (RSRSRASSAARITDEQIGDLVSKLQALLPEARLRSNDRVPSARVLQETCSYIRSL).

The protein belongs to the bHLH protein family.

In terms of biological role, atypical and probable non DNA-binding bHLH transcription factor that integrates multiple signaling pathways to regulate cell elongation and plant development. This is Transcription factor ILI7 (ILI7) from Oryza sativa subsp. indica (Rice).